Consider the following 133-residue polypeptide: Small ribosomal subunit protein uS11 (133 aa).

It belongs to the universal ribosomal protein uS11 family. As to quaternary structure, part of the 30S ribosomal subunit.

Its function is as follows. Located on the platform of the 30S subunit. The polypeptide is Small ribosomal subunit protein uS11 (Hyperthermus butylicus (strain DSM 5456 / JCM 9403 / PLM1-5)).